We begin with the raw amino-acid sequence, 276 residues long: 4-hydroxy-3-methylbut-2-enyl diphosphate reductase (276 aa).

C12 is a [4Fe-4S] cluster binding site. Positions 36 and 71 each coordinate (2E)-4-hydroxy-3-methylbut-2-enyl diphosphate. Dimethylallyl diphosphate is bound by residues H36 and H71. 2 residues coordinate isopentenyl diphosphate: H36 and H71. C93 serves as a coordination point for [4Fe-4S] cluster. H121 contacts (2E)-4-hydroxy-3-methylbut-2-enyl diphosphate. H121 contributes to the dimethylallyl diphosphate binding site. H121 serves as a coordination point for isopentenyl diphosphate. Catalysis depends on E123, which acts as the Proton donor. Residue T160 participates in (2E)-4-hydroxy-3-methylbut-2-enyl diphosphate binding. C188 contributes to the [4Fe-4S] cluster binding site. (2E)-4-hydroxy-3-methylbut-2-enyl diphosphate contacts are provided by S216, S217, N218, and S259. Dimethylallyl diphosphate-binding residues include S216, S217, N218, and S259. S216, S217, N218, and S259 together coordinate isopentenyl diphosphate.

Belongs to the IspH family. It depends on [4Fe-4S] cluster as a cofactor.

The catalysed reaction is isopentenyl diphosphate + 2 oxidized [2Fe-2S]-[ferredoxin] + H2O = (2E)-4-hydroxy-3-methylbut-2-enyl diphosphate + 2 reduced [2Fe-2S]-[ferredoxin] + 2 H(+). The enzyme catalyses dimethylallyl diphosphate + 2 oxidized [2Fe-2S]-[ferredoxin] + H2O = (2E)-4-hydroxy-3-methylbut-2-enyl diphosphate + 2 reduced [2Fe-2S]-[ferredoxin] + 2 H(+). It participates in isoprenoid biosynthesis; dimethylallyl diphosphate biosynthesis; dimethylallyl diphosphate from (2E)-4-hydroxy-3-methylbutenyl diphosphate: step 1/1. Its pathway is isoprenoid biosynthesis; isopentenyl diphosphate biosynthesis via DXP pathway; isopentenyl diphosphate from 1-deoxy-D-xylulose 5-phosphate: step 6/6. Catalyzes the conversion of 1-hydroxy-2-methyl-2-(E)-butenyl 4-diphosphate (HMBPP) into a mixture of isopentenyl diphosphate (IPP) and dimethylallyl diphosphate (DMAPP). Acts in the terminal step of the DOXP/MEP pathway for isoprenoid precursor biosynthesis. The chain is 4-hydroxy-3-methylbut-2-enyl diphosphate reductase from Nautilia profundicola (strain ATCC BAA-1463 / DSM 18972 / AmH).